A 349-amino-acid chain; its full sequence is Interferon regulatory factor 2 (349 aa).

Positions 5 to 113 (RMRMRPWLEE…NAFRVYRMLP (109 aa)) form a DNA-binding region, IRF tryptophan pentad repeat. N6-acetyllysine occurs at positions 75 and 78. Residues 117–148 (RPSKKGKKPKTEKEDKVKHIKQEPVESSLGLS) form a disordered region. The segment covering 125-140 (PKTEKEDKVKHIKQEP) has biased composition (basic and acidic residues). K137 is covalently cross-linked (Glycyl lysine isopeptide (Lys-Gly) (interchain with G-Cter in SUMO); alternate). K137 participates in a covalent cross-link: Glycyl lysine isopeptide (Lys-Gly) (interchain with G-Cter in SUMO2); alternate. A Glycyl lysine isopeptide (Lys-Gly) (interchain with G-Cter in SUMO) cross-link involves residue K166. Phosphoserine is present on S225. Residues 228-239 (SSYAESETTDSV) are compositionally biased toward polar residues. The disordered stretch occupies residues 228-251 (SSYAESETTDSVPSDEESAEGRPH). K260 is covalently cross-linked (Glycyl lysine isopeptide (Lys-Gly) (interchain with G-Cter in SUMO2)). K293 participates in a covalent cross-link: Glycyl lysine isopeptide (Lys-Gly) (interchain with G-Cter in SUMO). The disordered stretch occupies residues 297–349 (NPVPYNSSWPPFQDLPLSSSMTPASSSSRPDRETRASVIKKTSDITQARVKSC). Residues 314-324 (SSSMTPASSSS) are compositionally biased toward low complexity.

The protein belongs to the IRF family. As to quaternary structure, interacts with BRD7, IRF2BP1 and IRF2BP2. Interacts with CREBBP in growing cells; the interaction acetylates IRF2 and regulates IRF2-dependent H4 promoter activity. Acetylated by CBP/ p300 during cell-growth. Acetylation on Lys-75 is required for stimulation of H4 promoter activity. Post-translationally, the major sites of sumoylation are Lys-137 and Lys-293. Sumoylation with SUMO1 increases its transcriptional repressor activity on IRF1 and diminishes its ability to activate ISRE and H4 promoter. As to expression, expressed throughout the epithelium of the colon. Also expressed in lamina propria.

The protein localises to the nucleus. Specifically binds to the upstream regulatory region of type I IFN and IFN-inducible MHC class I genes (the interferon consensus sequence (ICS)) and represses those genes. Also acts as an activator for several genes including H4 and IL7. Constitutively binds to the ISRE promoter to activate IL7. Involved in cell cycle regulation through binding the site II (HiNF-M) promoter region of H4 and activating transcription during cell growth. Antagonizes IRF1 transcriptional activation. This Homo sapiens (Human) protein is Interferon regulatory factor 2 (IRF2).